A 236-amino-acid polypeptide reads, in one-letter code: Snake venom serine protease ussurin (236 aa).

Residues 1–227 form the Peptidase S1 domain; the sequence is VIGGVECNIN…YTDWIQSIIS (227 aa). A disulfide bridge connects residues Cys-28 and Cys-44. Active-site charge relay system residues include His-43 and Asp-88. N-linked (GlcNAc...) asparagine glycans are attached at residues Asn-99 and Asn-100. 3 disulfide bridges follow: Cys-120–Cys-188, Cys-152–Cys-167, and Cys-178–Cys-203. The active-site Charge relay system is Ser-182.

The protein belongs to the peptidase S1 family. Snake venom subfamily. As to quaternary structure, monomer. As to expression, expressed by the venom gland.

The protein localises to the secreted. Its function is as follows. Snake venom serine protease that may act in the hemostasis system of the prey. This chain is Snake venom serine protease ussurin, found in Gloydius ussuriensis (Ussuri mamushi).